The following is a 206-amino-acid chain: Large ribosomal subunit protein uL4 (206 aa).

The disordered stretch occupies residues 63 to 97; the sequence is MYKQKGTGRARHHSARAPQFRGGGKAHGPVVRSHE. A compositionally biased stretch (basic residues) spans 64 to 77; it reads YKQKGTGRARHHSA.

It belongs to the universal ribosomal protein uL4 family. In terms of assembly, part of the 50S ribosomal subunit.

One of the primary rRNA binding proteins, this protein initially binds near the 5'-end of the 23S rRNA. It is important during the early stages of 50S assembly. It makes multiple contacts with different domains of the 23S rRNA in the assembled 50S subunit and ribosome. Its function is as follows. Forms part of the polypeptide exit tunnel. In Rhizobium leguminosarum bv. trifolii (strain WSM2304), this protein is Large ribosomal subunit protein uL4.